Reading from the N-terminus, the 769-residue chain is Probable beta-glucosidase M (769 aa).

A signal peptide spans 1–22; the sequence is MHSNLGLAGLAGLLATASVCLS. N-linked (GlcNAc...) asparagine glycosylation is found at Asn-28, Asn-75, and Asn-262. Asp-290 is a catalytic residue. N-linked (GlcNAc...) asparagine glycosylation is found at Asn-318, Asn-325, Asn-437, and Asn-546.

It belongs to the glycosyl hydrolase 3 family.

The protein resides in the secreted. The catalysed reaction is Hydrolysis of terminal, non-reducing beta-D-glucosyl residues with release of beta-D-glucose.. It functions in the pathway glycan metabolism; cellulose degradation. Functionally, beta-glucosidases are one of a number of cellulolytic enzymes involved in the degradation of cellulosic biomass. Catalyzes the last step releasing glucose from the inhibitory cellobiose. This Neosartorya fischeri (strain ATCC 1020 / DSM 3700 / CBS 544.65 / FGSC A1164 / JCM 1740 / NRRL 181 / WB 181) (Aspergillus fischerianus) protein is Probable beta-glucosidase M (bglM).